The following is a 208-amino-acid chain: High frequency lysogenization protein HflD homolog (208 aa).

The stretch at 91 to 125 (LMVLERKLNANKQAMNQLGERLGQLERQLAHFDLE) forms a coiled coil.

This sequence belongs to the HflD family.

The protein resides in the cytoplasm. It is found in the cell inner membrane. This is High frequency lysogenization protein HflD homolog from Serratia proteamaculans (strain 568).